We begin with the raw amino-acid sequence, 429 residues long: tRNA-2-methylthio-N(6)-dimethylallyladenosine synthase (429 aa).

In terms of domain architecture, MTTase N-terminal spans 1 to 110; sequence MKFFIKTYGC…IPEAVELSIK (110 aa). Positions 10, 46, 75, 146, 150, and 153 each coordinate [4Fe-4S] cluster. A Radical SAM core domain is found at 132–364; the sequence is RNSKHHAWIT…NLQKEINKML (233 aa). Residues 366–427 form the TRAM domain; sequence ESYLDKTVEV…AGPLYGDIIK (62 aa).

Belongs to the methylthiotransferase family. MiaB subfamily. In terms of assembly, monomer. [4Fe-4S] cluster is required as a cofactor.

It is found in the cytoplasm. It carries out the reaction N(6)-dimethylallyladenosine(37) in tRNA + (sulfur carrier)-SH + AH2 + 2 S-adenosyl-L-methionine = 2-methylsulfanyl-N(6)-dimethylallyladenosine(37) in tRNA + (sulfur carrier)-H + 5'-deoxyadenosine + L-methionine + A + S-adenosyl-L-homocysteine + 2 H(+). Functionally, catalyzes the methylthiolation of N6-(dimethylallyl)adenosine (i(6)A), leading to the formation of 2-methylthio-N6-(dimethylallyl)adenosine (ms(2)i(6)A) at position 37 in tRNAs that read codons beginning with uridine. The polypeptide is tRNA-2-methylthio-N(6)-dimethylallyladenosine synthase (Thermosipho africanus (strain TCF52B)).